A 383-amino-acid chain; its full sequence is Chitinase-3-like protein 1 (383 aa).

The signal sequence occupies residues 1–21 (MGVKASQTGFVVLVLLQCCSA). One can recognise a GH18 domain in the interval 22-383 (YKLVCYYTSW…NAIKDALAAT (362 aa)). Cys-26 and Cys-51 are oxidised to a cystine. Residue Asn-60 is glycosylated (N-linked (GlcNAc...) asparagine). Residues 70–71 (EW), 97–100 (GGWN), Tyr-141, 204–207 (MTYD), and Arg-263 contribute to the chitin site. A disulfide bridge links Cys-300 with Cys-364. An important for AKT1 activation and IL8 production region spans residues 324–338 (QWVGYDDQESVKSKV). Residue Trp-352 coordinates chitin.

This sequence belongs to the glycosyl hydrolase 18 family. In terms of assembly, monomer. Glycosylated. Present in activated macrophages, articular chondrocytes, synovial cells as well as in liver. Very low or undetectable expression in non-inflammatory colon. Undetectable in muscle tissues, lung, pancreas, mononuclear cells, or fibroblasts.

It is found in the secreted. It localises to the extracellular space. Its subcellular location is the cytoplasm. The protein resides in the perinuclear region. The protein localises to the endoplasmic reticulum. In terms of biological role, carbohydrate-binding lectin with a preference for chitin. Has no chitinase activity. May play a role in tissue remodeling and in the capacity of cells to respond to and cope with changes in their environment. Plays a role in T-helper cell type 2 (Th2) inflammatory response and IL-13-induced inflammation, regulating allergen sensitization, inflammatory cell apoptosis, dendritic cell accumulation and M2 macrophage differentiation. Facilitates invasion of pathogenic enteric bacteria into colonic mucosa and lymphoid organs. Mediates activation of AKT1 signaling pathway and subsequent IL8 production in colonic epithelial cells. Regulates antibacterial responses in lung by contributing to macrophage bacterial killing, controlling bacterial dissemination and augmenting host tolerance. Also regulates hyperoxia-induced injury, inflammation and epithelial apoptosis in lung. The protein is Chitinase-3-like protein 1 (CHI3L1) of Homo sapiens (Human).